A 240-amino-acid chain; its full sequence is Phosphoenolpyruvate guanylyltransferase (240 aa).

Phosphoenolpyruvate is bound by residues T161, G178, and S181.

It belongs to the CofC family.

The enzyme catalyses phosphoenolpyruvate + GTP + H(+) = enolpyruvoyl-2-diphospho-5'-guanosine + diphosphate. It participates in cofactor biosynthesis; coenzyme F420 biosynthesis. Its function is as follows. Guanylyltransferase that catalyzes the activation of phosphoenolpyruvate (PEP) as enolpyruvoyl-2-diphospho-5'-guanosine, via the condensation of PEP with GTP. It is involved in the biosynthesis of coenzyme F420, a hydride carrier cofactor. The polypeptide is Phosphoenolpyruvate guanylyltransferase (Rhodococcus opacus (strain B4)).